A 636-amino-acid chain; its full sequence is Threonine--tRNA ligase (636 aa).

The TGS domain occupies 1-63 (MINITTSFPN…SKDGSVDPVT (63 aa)). The catalytic stretch occupies residues 244 to 535 (DHRKIAKDLG…LIEHYAGNIP (292 aa)). Zn(2+) contacts are provided by cysteine 335, histidine 386, and histidine 512.

The protein belongs to the class-II aminoacyl-tRNA synthetase family. Homodimer. Zn(2+) is required as a cofactor.

It is found in the cytoplasm. The catalysed reaction is tRNA(Thr) + L-threonine + ATP = L-threonyl-tRNA(Thr) + AMP + diphosphate + H(+). In terms of biological role, catalyzes the attachment of threonine to tRNA(Thr) in a two-step reaction: L-threonine is first activated by ATP to form Thr-AMP and then transferred to the acceptor end of tRNA(Thr). Also edits incorrectly charged L-seryl-tRNA(Thr). This chain is Threonine--tRNA ligase, found in Anaplasma marginale (strain Florida).